A 330-amino-acid polypeptide reads, in one-letter code: 2-oxoisovalerate dehydrogenase subunit alpha (330 aa).

Substrate contacts are provided by residues Phe44, Tyr73, 107–110 (MPGH), and Ser123. A thiamine diphosphate-binding site is contributed by 72–74 (YYR). Thiamine diphosphate contacts are provided by residues 123 to 125 (SPV), 153 to 159 (GEGSSNQ), 183 to 187 (NKYAI), and His252. Positions 154, 183, and 185 each coordinate Mg(2+). Positions 249–272 (LTPHSSDDDDSSYRGREEVEEAKK) are disordered. A compositionally biased stretch (basic and acidic residues) spans 259–272 (SSYRGREEVEEAKK).

It belongs to the BCKDHA family. Heterotetramer of two alpha and two beta chains. Directly associated with ODBB in the E1 complex. Thiamine diphosphate is required as a cofactor.

The enzyme catalyses N(6)-[(R)-lipoyl]-L-lysyl-[protein] + 3-methyl-2-oxobutanoate + H(+) = N(6)-[(R)-S(8)-2-methylpropanoyldihydrolipoyl]-L-lysyl-[protein] + CO2. In terms of biological role, the branched-chain alpha-keto dehydrogenase complex catalyzes the overall conversion of alpha-keto acids to acyl-CoA and CO(2). It contains multiple copies of three enzymatic components: branched-chain alpha-keto acid decarboxylase (E1), lipoamide acyltransferase (E2) and lipoamide dehydrogenase (E3). The polypeptide is 2-oxoisovalerate dehydrogenase subunit alpha (bfmBAA) (Bacillus subtilis (strain 168)).